The following is a 517-amino-acid chain: Putative ribose/galactose/methyl galactoside import ATP-binding protein 1 (517 aa).

2 consecutive ABC transporter domains span residues 23-258 (LQLQ…VGRP) and 269-515 (TPTD…SGRS). 55-62 (GENGAGKS) provides a ligand contact to ATP.

The protein belongs to the ABC transporter superfamily. Carbohydrate importer 2 (CUT2) (TC 3.A.1.2) family.

It localises to the cell inner membrane. The catalysed reaction is D-ribose(out) + ATP + H2O = D-ribose(in) + ADP + phosphate + H(+). It carries out the reaction D-galactose(out) + ATP + H2O = D-galactose(in) + ADP + phosphate + H(+). Functionally, part of an ABC transporter complex involved in carbohydrate import. Could be involved in ribose, galactose and/or methyl galactoside import. Responsible for energy coupling to the transport system. In Burkholderia ambifaria (strain ATCC BAA-244 / DSM 16087 / CCUG 44356 / LMG 19182 / AMMD) (Burkholderia cepacia (strain AMMD)), this protein is Putative ribose/galactose/methyl galactoside import ATP-binding protein 1.